We begin with the raw amino-acid sequence, 335 residues long: Arylacetonitrilase (335 aa).

A CN hydrolase domain is found at 6-291 (LKVAITQAQP…EGIVYADLDM (286 aa)). Glutamate 46 acts as the Proton acceptor in catalysis. Lysine 127 is an active-site residue. The active-site Nucleophile is cysteine 168.

It belongs to the carbon-nitrogen hydrolase superfamily. Nitrilase family.

The enzyme catalyses a nitrile + 2 H2O = a carboxylate + NH4(+). It catalyses the reaction 4-chlorophenylacetonitrile + 2 H2O = 4-chlorophenylacetate + NH4(+). In terms of biological role, nitrilase that hydrolyzes preferentially phenylacetonitrile, (R,S)-mandelonitrile, and 3-indolylacetonitrile. This chain is Arylacetonitrilase, found in Arthroderma benhamiae (strain ATCC MYA-4681 / CBS 112371) (Trichophyton mentagrophytes).